A 442-amino-acid polypeptide reads, in one-letter code: KICSTOR subunit 2 (442 aa).

The protein belongs to the KICS2 family. May be part of the KICSTOR complex.

Its subcellular location is the lysosome membrane. As part of the KICSTOR complex may function in the amino acid-sensing branch of the TORC1 signaling pathway. In Xenopus laevis (African clawed frog), this protein is KICSTOR subunit 2 (kics2).